A 208-amino-acid polypeptide reads, in one-letter code: Small ribosomal subunit protein uS4 (208 aa).

One can recognise an S4 RNA-binding domain in the interval 98–161 (RRLDNVIYRL…RKMPVIAEAQ (64 aa)).

The protein belongs to the universal ribosomal protein uS4 family. As to quaternary structure, part of the 30S ribosomal subunit. Contacts protein S5. The interaction surface between S4 and S5 is involved in control of translational fidelity.

Its function is as follows. One of the primary rRNA binding proteins, it binds directly to 16S rRNA where it nucleates assembly of the body of the 30S subunit. With S5 and S12 plays an important role in translational accuracy. In Oleidesulfovibrio alaskensis (strain ATCC BAA-1058 / DSM 17464 / G20) (Desulfovibrio alaskensis), this protein is Small ribosomal subunit protein uS4.